The sequence spans 289 residues: tRNA pseudouridine synthase A (289 aa).

D53 (nucleophile) is an active-site residue. Residue Y119 coordinates substrate.

It belongs to the tRNA pseudouridine synthase TruA family. In terms of assembly, homodimer.

It catalyses the reaction uridine(38/39/40) in tRNA = pseudouridine(38/39/40) in tRNA. In terms of biological role, formation of pseudouridine at positions 38, 39 and 40 in the anticodon stem and loop of transfer RNAs. This chain is tRNA pseudouridine synthase A, found in Corynebacterium glutamicum (strain ATCC 13032 / DSM 20300 / JCM 1318 / BCRC 11384 / CCUG 27702 / LMG 3730 / NBRC 12168 / NCIMB 10025 / NRRL B-2784 / 534).